We begin with the raw amino-acid sequence, 498 residues long: uncharacterized protein (498 aa).

A run of 11 helical transmembrane segments spans residues 54 to 74 (LLKM…MAFL), 100 to 120 (VAVS…VVLV), 128 to 148 (MLAF…FMSS), 150 to 170 (GGLI…FPAL), 188 to 208 (SYLF…AYAL), 221 to 241 (WIYI…LFAL), 302 to 322 (VLYG…FVGL), 326 to 346 (YMTI…AWLS), 353 to 373 (AVYL…MLAS), 381 to 401 (TATY…LGWL), and 446 to 466 (AFTL…FFSL).

It belongs to the major facilitator superfamily. Allantoate permease family.

The protein localises to the membrane. This is an uncharacterized protein from Schizosaccharomyces pombe (strain 972 / ATCC 24843) (Fission yeast).